A 581-amino-acid chain; its full sequence is Prolactin receptor (581 aa).

The signal sequence occupies residues 1–24 (MKENVASRAVFILLLFLNASLLNG). Topologically, residues 25–234 (QSPPGKPKII…QIPNDFPVND (210 aa)) are extracellular. Fibronectin type-III domains follow at residues 27-127 (PPGK…IVEP) and 129-229 (PPAN…IPND). An intrachain disulfide couples Cys36 to Cys46. Asn59 carries N-linked (GlcNAc...) asparagine glycosylation. Cys75 and Cys86 are oxidised to a cystine. Asn132 carries N-linked (GlcNAc...) asparagine glycosylation. 2 residues coordinate Zn(2+): Asp211 and His212. The WSXWS motif signature appears at 215-219 (WSEWS). Asn233 is a glycosylation site (N-linked (GlcNAc...) asparagine). A helical transmembrane segment spans residues 235–258 (TTVWIFVAVLSAVICLIMVWAVAL). Residues 259 to 581 (KGYSMMTCIL…PAKEAPPALP (323 aa)) lie on the Cytoplasmic side of the membrane. Positions 267-275 (ILPPVPGPK) match the Box 1 motif motif. Disordered stretches follow at residues 321-362 (EDQQ…LFSE) and 462-502 (LKPS…QDKT). The segment covering 329–349 (PSKEHMEQGVKPMHMDPDSDS) has biased composition (basic and acidic residues).

It belongs to the type I cytokine receptor family. Type 1 subfamily. In terms of assembly, interacts with SMARCA1. Interacts with NEK3 and VAV2 and this interaction is prolactin-dependent.

It is found in the membrane. This is a receptor for the anterior pituitary hormone prolactin. The polypeptide is Prolactin receptor (PRLR) (Cervus elaphus (Red deer)).